Reading from the N-terminus, the 150-residue chain is MIVEEIQGNIANLSNSEKQKHVEKVYLENSDLVKRIQRVVTDHGTEIGIRLKQPIDLQYGDILYADDHNMIIVDVNSEDLLVIQPRTLQEMGDIAHQLGNRHLPAQFTETEMLVQYDYLVEDLLKSLGIPYVREDRKVNKAFRHIGHSHD.

This sequence belongs to the UreE family.

The protein localises to the cytoplasm. Its function is as follows. Involved in urease metallocenter assembly. Binds nickel. Probably functions as a nickel donor during metallocenter assembly. The polypeptide is Urease accessory protein UreE (Staphylococcus aureus (strain Mu3 / ATCC 700698)).